A 259-amino-acid chain; its full sequence is Zinc import ATP-binding protein ZnuC (259 aa).

The 218-residue stretch at 6 to 223 (VTVQSVSVTL…PAYHELFGPG (218 aa)) folds into the ABC transporter domain. ATP is bound at residue 38 to 45 (GPNGAGKS). Residues 230–259 (ALYTHDHDHDHDLHGNATHSHDHNGPCNHD) form a disordered region. A compositionally biased stretch (basic and acidic residues) spans 233-259 (THDHDHDHDLHGNATHSHDHNGPCNHD).

Belongs to the ABC transporter superfamily. Zinc importer (TC 3.A.1.15.5) family. The complex is composed of two ATP-binding proteins (ZnuC), two transmembrane proteins (ZnuB) and a solute-binding protein (ZnuA).

It is found in the cell inner membrane. It carries out the reaction Zn(2+)(out) + ATP(in) + H2O(in) = Zn(2+)(in) + ADP(in) + phosphate(in) + H(+)(in). Part of the ABC transporter complex ZnuABC involved in zinc import. Responsible for energy coupling to the transport system. The sequence is that of Zinc import ATP-binding protein ZnuC from Alcanivorax borkumensis (strain ATCC 700651 / DSM 11573 / NCIMB 13689 / SK2).